The following is a 196-amino-acid chain: Segregation and condensation protein B (196 aa).

This sequence belongs to the ScpB family. In terms of assembly, homodimer. Homodimerization may be required to stabilize the binding of ScpA to the Smc head domains. Component of a cohesin-like complex composed of ScpA, ScpB and the Smc homodimer, in which ScpA and ScpB bind to the head domain of Smc. The presence of the three proteins is required for the association of the complex with DNA.

Its subcellular location is the cytoplasm. Its function is as follows. Participates in chromosomal partition during cell division. May act via the formation of a condensin-like complex containing Smc and ScpA that pull DNA away from mid-cell into both cell halves. The chain is Segregation and condensation protein B from Lactobacillus johnsonii (strain CNCM I-12250 / La1 / NCC 533).